The chain runs to 563 residues: Germacrene-A synthase (563 aa).

Residues aspartate 316, aspartate 320, aspartate 460, threonine 464, and glutamate 468 each coordinate Mg(2+). A DDXXD motif motif is present at residues 316–320; sequence DDTYD.

The protein belongs to the terpene synthase family. Tpsa subfamily. Mg(2+) serves as cofactor. Mn(2+) is required as a cofactor. As to expression, high expression in disk florets, moderate expression in ray florets and detected in leaves and stems, but not in roots.

It carries out the reaction (2E,6E)-farnesyl diphosphate = (+)-(R)-germacrene A + diphosphate. It participates in secondary metabolite biosynthesis; terpenoid biosynthesis. Functionally, sesquiterpene synthase involved in germacrene A biosynthesis. May be involved in the biosynthesis of the sesquiterpene lactone matricine, one of the major active compounds of chamomile flowers. In Matricaria chamomilla var. recutita (German chamomile), this protein is Germacrene-A synthase.